The sequence spans 209 residues: MIGLVGKKIGMTRIFTEEGTSIPVTVIELKENRITQVKNINTDLYCAIQVTTGIKKSNRLNKPQSGHFLKSGVTPGRGLWEFRTDKNNNFKIGQSITINIFNNVKKVDITGISKGKGFSGTVKRWNFHTQDATHGNSLSHRVPGSIGQNQTPGRVFKGKKMAGQLGNTRVTVQSLNIVRIDERRNLLLVKGAVPGATGSDLIVKPAIKV.

At Q150 the chain carries N5-methylglutamine.

This sequence belongs to the universal ribosomal protein uL3 family. In terms of assembly, part of the 50S ribosomal subunit. Forms a cluster with proteins L14 and L19. Post-translationally, methylated by PrmB.

Functionally, one of the primary rRNA binding proteins, it binds directly near the 3'-end of the 23S rRNA, where it nucleates assembly of the 50S subunit. In Buchnera aphidicola subsp. Acyrthosiphon pisum (strain 5A), this protein is Large ribosomal subunit protein uL3.